The following is a 396-amino-acid chain: Elongation factor Tu (396 aa).

Residues 10 to 206 (KPHCNIGTIG…QVDAYIPQPE (197 aa)) enclose the tr-type G domain. The G1 stretch occupies residues 19-26 (GHVDHGKT). Residue 19–26 (GHVDHGKT) coordinates GTP. Thr-26 serves as a coordination point for Mg(2+). The interval 60 to 64 (GITIS) is G2. The segment at 81-84 (DCPG) is G3. GTP is bound by residues 81-85 (DCPGH) and 136-139 (NKVD). Residues 136–139 (NKVD) are G4. Residues 174 to 176 (SAL) form a G5 region.

The protein belongs to the TRAFAC class translation factor GTPase superfamily. Classic translation factor GTPase family. EF-Tu/EF-1A subfamily. In terms of assembly, monomer.

The protein resides in the cytoplasm. It catalyses the reaction GTP + H2O = GDP + phosphate + H(+). Functionally, GTP hydrolase that promotes the GTP-dependent binding of aminoacyl-tRNA to the A-site of ribosomes during protein biosynthesis. The chain is Elongation factor Tu from Gluconobacter oxydans (strain 621H) (Gluconobacter suboxydans).